Here is a 669-residue protein sequence, read N- to C-terminus: CoB--CoM heterodisulfide reductase iron-sulfur subunit A 1 (669 aa).

153–176 is an FAD binding site; that stretch reads GGGIAGIQAALDLADQGFKVYLVE. Residue U200 is a non-standard amino acid, selenocysteine. 4 4Fe-4S ferredoxin-type domains span residues 239–270, 287–318, 584–613, and 617–646; these read KKPR…FDLG, LVYT…FDQE, ITAT…MVEK, and RVAE…LRYY. [4Fe-4S] cluster is bound by residues C249, C252, C255, C259, C296, C299, C302, C306, C593, C596, C599, C603, C626, C629, C632, and C636.

The protein belongs to the HdrA family. The ferredoxin:CoB-CoM heterodisulfide reductase is composed of three subunits; HdrA, HdrB and HdrC. It depends on [4Fe-4S] cluster as a cofactor. Requires FAD as cofactor.

The protein operates within cofactor metabolism; coenzyme M-coenzyme B heterodisulfide reduction; coenzyme B and coenzyme M from coenzyme M-coenzyme B heterodisulfide: step 1/1. Functionally, part of a complex that catalyzes the reversible reduction of CoM-S-S-CoB to the thiol-coenzymes H-S-CoM (coenzyme M) and H-S-CoB (coenzyme B). The polypeptide is CoB--CoM heterodisulfide reductase iron-sulfur subunit A 1 (hdrA1) (Methanopyrus kandleri (strain AV19 / DSM 6324 / JCM 9639 / NBRC 100938)).